A 202-amino-acid chain; its full sequence is Molybdenum cofactor guanylyltransferase (202 aa).

GTP-binding positions include 9 to 11 (LAG), Lys22, Asp70, and Asp96. Mg(2+) is bound at residue Asp96.

The protein belongs to the MobA family. In terms of assembly, monomer. Mg(2+) is required as a cofactor.

The protein resides in the cytoplasm. The catalysed reaction is Mo-molybdopterin + GTP + H(+) = Mo-molybdopterin guanine dinucleotide + diphosphate. Transfers a GMP moiety from GTP to Mo-molybdopterin (Mo-MPT) cofactor (Moco or molybdenum cofactor) to form Mo-molybdopterin guanine dinucleotide (Mo-MGD) cofactor. The polypeptide is Molybdenum cofactor guanylyltransferase (Desulfosudis oleivorans (strain DSM 6200 / JCM 39069 / Hxd3) (Desulfococcus oleovorans)).